The primary structure comprises 191 residues: Pyridoxal 5'-phosphate synthase subunit PdxT (191 aa).

L-glutamine is bound at residue 52–54 (GES). The Nucleophile role is filled by Cys81. L-glutamine contacts are provided by residues Arg108 and 136–137 (IR). Catalysis depends on charge relay system residues His172 and Glu174.

The protein belongs to the glutaminase PdxT/SNO family. In terms of assembly, in the presence of PdxS, forms a dodecamer of heterodimers. Only shows activity in the heterodimer.

The enzyme catalyses aldehydo-D-ribose 5-phosphate + D-glyceraldehyde 3-phosphate + L-glutamine = pyridoxal 5'-phosphate + L-glutamate + phosphate + 3 H2O + H(+). It carries out the reaction L-glutamine + H2O = L-glutamate + NH4(+). The protein operates within cofactor biosynthesis; pyridoxal 5'-phosphate biosynthesis. Its function is as follows. Catalyzes the hydrolysis of glutamine to glutamate and ammonia as part of the biosynthesis of pyridoxal 5'-phosphate. The resulting ammonia molecule is channeled to the active site of PdxS. The chain is Pyridoxal 5'-phosphate synthase subunit PdxT from Actinobacillus pleuropneumoniae serotype 7 (strain AP76).